The chain runs to 349 residues: Phenylalanine--tRNA ligase alpha subunit (349 aa).

Glu258 contributes to the Mg(2+) binding site.

This sequence belongs to the class-II aminoacyl-tRNA synthetase family. Phe-tRNA synthetase alpha subunit type 1 subfamily. As to quaternary structure, tetramer of two alpha and two beta subunits. Requires Mg(2+) as cofactor.

It is found in the cytoplasm. The catalysed reaction is tRNA(Phe) + L-phenylalanine + ATP = L-phenylalanyl-tRNA(Phe) + AMP + diphosphate + H(+). The protein is Phenylalanine--tRNA ligase alpha subunit of Rickettsia canadensis (strain McKiel).